The chain runs to 105 residues: Integration host factor subunit beta (105 aa).

This sequence belongs to the bacterial histone-like protein family. As to quaternary structure, heterodimer of an alpha and a beta chain.

In terms of biological role, this protein is one of the two subunits of integration host factor, a specific DNA-binding protein that functions in genetic recombination as well as in transcriptional and translational control. In Nitrosomonas eutropha (strain DSM 101675 / C91 / Nm57), this protein is Integration host factor subunit beta.